We begin with the raw amino-acid sequence, 273 residues long: Large ribosomal subunit protein uL2 (273 aa).

The interval 224–263 is disordered; sequence AMNPVDHPHGGGEGRNFGKHPVTPWGLQTKGKKTRKNKRT. Residues 253-263 are compositionally biased toward basic residues; sequence KGKKTRKNKRT.

Belongs to the universal ribosomal protein uL2 family. In terms of assembly, part of the 50S ribosomal subunit. Forms a bridge to the 30S subunit in the 70S ribosome.

One of the primary rRNA binding proteins. Required for association of the 30S and 50S subunits to form the 70S ribosome, for tRNA binding and peptide bond formation. It has been suggested to have peptidyltransferase activity; this is somewhat controversial. Makes several contacts with the 16S rRNA in the 70S ribosome. This is Large ribosomal subunit protein uL2 from Buchnera aphidicola subsp. Schizaphis graminum (strain Sg).